Here is a 233-residue protein sequence, read N- to C-terminus: Large ribosomal subunit protein bL25 (233 aa).

Residues 1–23 form a disordered region; that stretch reads MATVRELKATARPKSGKGAARAE.

The protein belongs to the bacterial ribosomal protein bL25 family. CTC subfamily. Part of the 50S ribosomal subunit; part of the 5S rRNA/L5/L18/L25 subcomplex. Contacts the 5S rRNA. Binds to the 5S rRNA independently of L5 and L18.

This is one of the proteins that binds to the 5S RNA in the ribosome where it forms part of the central protuberance. The protein is Large ribosomal subunit protein bL25 of Nitrobacter hamburgensis (strain DSM 10229 / NCIMB 13809 / X14).